A 393-amino-acid polypeptide reads, in one-letter code: MSHVMNTYARLPVTFVKGEGVWLWDDQGNRYLDALSGIAVCGVGHCHPVLVKALCEQVSTLIHTSNVYHIQHQERLADRLTSLSGLEKAFFCNSGAEANEAAIKLARLYGHNQGINLPTIIVMERSFHGRTMATLTATGNRKTQAGFEPLLTGFVRVPYDDLEAVNKVAANNREIVAILLETYQGEGGVNFPQANYLQGLRRICDQNGWLLMLDEVQCGLGRTGKWFAFQHSEVMPDAMTLAKGLGSGVPIGACLAGGKAAEVFKPGNHASTFGGNPLACRAALTTLDIIEQEGLMDNAVTIGNFMWEEFGRRLQAWQDVLKIRGQGMMIGIELPVPCSELVPEALKRRVLVNVTSEKVVRLLPALNMQKAEAEQVVTEVSALITWFLESRVK.

Residues 95-96 (GA) and phenylalanine 127 contribute to the pyridoxal 5'-phosphate site. Residue arginine 130 participates in N(2)-acetyl-L-ornithine binding. 214–217 (DEVQ) provides a ligand contact to pyridoxal 5'-phosphate. Lysine 243 is modified (N6-(pyridoxal phosphate)lysine). Residue serine 271 coordinates N(2)-acetyl-L-ornithine. Residue threonine 272 participates in pyridoxal 5'-phosphate binding.

It belongs to the class-III pyridoxal-phosphate-dependent aminotransferase family. ArgD subfamily. Homodimer. The cofactor is pyridoxal 5'-phosphate.

It localises to the cytoplasm. It catalyses the reaction N(2)-acetyl-L-ornithine + 2-oxoglutarate = N-acetyl-L-glutamate 5-semialdehyde + L-glutamate. It functions in the pathway amino-acid biosynthesis; L-arginine biosynthesis; N(2)-acetyl-L-ornithine from L-glutamate: step 4/4. The protein is Acetylornithine aminotransferase of Nitrosomonas europaea (strain ATCC 19718 / CIP 103999 / KCTC 2705 / NBRC 14298).